The sequence spans 235 residues: Phosphoribosylaminoimidazole-succinocarboxamide synthase (235 aa).

Belongs to the SAICAR synthetase family.

The catalysed reaction is 5-amino-1-(5-phospho-D-ribosyl)imidazole-4-carboxylate + L-aspartate + ATP = (2S)-2-[5-amino-1-(5-phospho-beta-D-ribosyl)imidazole-4-carboxamido]succinate + ADP + phosphate + 2 H(+). It participates in purine metabolism; IMP biosynthesis via de novo pathway; 5-amino-1-(5-phospho-D-ribosyl)imidazole-4-carboxamide from 5-amino-1-(5-phospho-D-ribosyl)imidazole-4-carboxylate: step 1/2. The chain is Phosphoribosylaminoimidazole-succinocarboxamide synthase from Caldanaerobacter subterraneus subsp. tengcongensis (strain DSM 15242 / JCM 11007 / NBRC 100824 / MB4) (Thermoanaerobacter tengcongensis).